Consider the following 393-residue polypeptide: 5-azacytidine-induced protein 2 (393 aa).

The interval 1–198 is homodimerization; that stretch reads MDALVEDDIC…IELQKAKQTD (198 aa). Positions 40-198 form a coiled coil; that stretch reads ALVTAYEDIK…IELQKAKQTD (159 aa). The interval 217–258 is interaction with TBK1 and IKBKE; sequence SDNMQSAYWELKREMSNLHLVTQVQAELLRKLKTPAAIKKAC. A Phosphoserine modification is found at S319. Disordered stretches follow at residues 321 to 340 and 345 to 393; these read TDHE…HNSY and LEDN…HYKH. At S354 the chain carries Phosphoserine. Polar residues predominate over residues 384–393; sequence QHNQNCHYKH.

Homodimer. Interacts with IKBKE, TBK1 and TICAM1. Interacts with TAX1BP1. Interacts with CALCOCO2. In terms of processing, ubiquitinated via 'Lys-48'-linked polyubiquitination by TRIM38, leading to its degradation.

Its subcellular location is the cytoplasm. Functionally, adapter protein which binds TBK1 and IKBKE playing a role in antiviral innate immunity. Activates serine/threonine-protein kinase TBK1 and facilitates its oligomerization. Enhances the phosphorylation of NF-kappa-B p65 subunit RELA by TBK1. Promotes TBK1-induced as well as TNF-alpha or PMA-induced activation of NF-kappa-B. Participates in IFNB promoter activation via TICAM1. The protein is 5-azacytidine-induced protein 2 (AZI2) of Bos taurus (Bovine).